The primary structure comprises 84 residues: Large ribosomal subunit protein bL27 (84 aa).

The interval 1–22 (MAHKKGASSTRNGRDSNAQRLG) is disordered. Residues 7–19 (ASSTRNGRDSNAQ) are compositionally biased toward polar residues.

It belongs to the bacterial ribosomal protein bL27 family.

This Streptomyces avermitilis (strain ATCC 31267 / DSM 46492 / JCM 5070 / NBRC 14893 / NCIMB 12804 / NRRL 8165 / MA-4680) protein is Large ribosomal subunit protein bL27.